We begin with the raw amino-acid sequence, 345 residues long: Heat-inducible transcription repressor HrcA (345 aa).

It belongs to the HrcA family.

Negative regulator of class I heat shock genes (grpE-dnaK-dnaJ and groELS operons). Prevents heat-shock induction of these operons. The chain is Heat-inducible transcription repressor HrcA from Dehalococcoides mccartyi (strain ATCC BAA-2100 / JCM 16839 / KCTC 5957 / BAV1).